A 557-amino-acid chain; its full sequence is DNA mismatch repair protein MutL (557 aa).

Belongs to the DNA mismatch repair MutL/HexB family.

In terms of biological role, this protein is involved in the repair of mismatches in DNA. It is required for dam-dependent methyl-directed DNA mismatch repair. May act as a 'molecular matchmaker', a protein that promotes the formation of a stable complex between two or more DNA-binding proteins in an ATP-dependent manner without itself being part of a final effector complex. The sequence is that of DNA mismatch repair protein MutL from Methanothrix thermoacetophila (strain DSM 6194 / JCM 14653 / NBRC 101360 / PT) (Methanosaeta thermophila).